Reading from the N-terminus, the 1228-residue chain is S-layer protein (1228 aa).

An N-terminal signal peptide occupies residues 1-30 (MDRKKAVKLATASAIAASAFVAANPNASEA).

The protein localises to the secreted. It is found in the cell wall. Its subcellular location is the S-layer. Functionally, the S-layer is a paracrystalline mono-layered assembly of proteins which coat the surface of bacteria. The sequence is that of S-layer protein (sbsA) from Geobacillus stearothermophilus (Bacillus stearothermophilus).